Here is a 109-residue protein sequence, read N- to C-terminus: Movement protein (109 aa).

The tract at residues 1-28 (MDSFGRAPPLWPQSALPRVPGAAPSSSG) is disordered. The chain crosses the membrane as a helical span at residues 34–54 (VGEIAIFTFVAVLALYLLWSW).

It belongs to the mastrevirus movement protein family. As to quaternary structure, interacts with the capsid protein (CP). Part of a MP-CP-viral DNA complex.

Its subcellular location is the host membrane. In terms of biological role, involved in the viral transport within, and between cells. This Sugarcane streak virus (isolate South Africa) (SSV) protein is Movement protein.